Reading from the N-terminus, the 122-residue chain is Large ribosomal subunit protein uL14c (122 aa).

This sequence belongs to the universal ribosomal protein uL14 family. In terms of assembly, part of the 50S ribosomal subunit.

Its subcellular location is the plastid. The protein resides in the chloroplast. Binds to 23S rRNA. The sequence is that of Large ribosomal subunit protein uL14c from Oenothera biennis (German evening primrose).